Reading from the N-terminus, the 141-residue chain is Nucleoside diphosphate kinase (141 aa).

The ATP site is built by Lys11, Tyr59, Arg87, Thr93, Arg104, and Asn114. His117 serves as the catalytic Pros-phosphohistidine intermediate.

This sequence belongs to the NDK family. Homotetramer. Requires Mg(2+) as cofactor.

It is found in the cytoplasm. The catalysed reaction is a 2'-deoxyribonucleoside 5'-diphosphate + ATP = a 2'-deoxyribonucleoside 5'-triphosphate + ADP. It catalyses the reaction a ribonucleoside 5'-diphosphate + ATP = a ribonucleoside 5'-triphosphate + ADP. Its function is as follows. Major role in the synthesis of nucleoside triphosphates other than ATP. The ATP gamma phosphate is transferred to the NDP beta phosphate via a ping-pong mechanism, using a phosphorylated active-site intermediate. This chain is Nucleoside diphosphate kinase, found in Orientia tsutsugamushi (strain Boryong) (Rickettsia tsutsugamushi).